A 348-amino-acid chain; its full sequence is Dihydroorotase (348 aa).

Zn(2+)-binding residues include H17 and H19. Residues 19–21 and N45 contribute to the substrate site; that span reads HLR. Positions 103, 140, and 178 each coordinate Zn(2+). Residue K103 is modified to N6-carboxylysine. H140 is a substrate binding site. L223 is a binding site for substrate. D251 lines the Zn(2+) pocket. The active site involves D251. Residues H255 and A267 each contribute to the substrate site.

Belongs to the metallo-dependent hydrolases superfamily. DHOase family. Class II DHOase subfamily. As to quaternary structure, homodimer. Zn(2+) is required as a cofactor.

It carries out the reaction (S)-dihydroorotate + H2O = N-carbamoyl-L-aspartate + H(+). It participates in pyrimidine metabolism; UMP biosynthesis via de novo pathway; (S)-dihydroorotate from bicarbonate: step 3/3. In terms of biological role, catalyzes the reversible cyclization of carbamoyl aspartate to dihydroorotate. In Escherichia coli O7:K1 (strain IAI39 / ExPEC), this protein is Dihydroorotase.